Consider the following 397-residue polypeptide: DnaJ homolog subfamily A member 1 (397 aa).

The J domain maps to 6–68; that stretch reads TYYDVLGVKP…KKRELYDKGG (63 aa). Lysine 66 carries the post-translational modification N6-acetyllysine. The residue at position 83 (serine 83) is a Phosphoserine. The CR-type zinc-finger motif lies at 121 to 205; it reads GATRKLALQK…CNGRKIVREK (85 aa). Cysteine 134, cysteine 137, cysteine 150, cysteine 153, cysteine 177, cysteine 180, cysteine 193, and cysteine 196 together coordinate Zn(2+). 4 CXXCXGXG motif repeats span residues 134-141, 150-157, 177-184, and 193-200; these read CDKCEGRG, CPNCRGTG, CMECQGHG, and CKSCNGRK. Serine 335 carries the post-translational modification Phosphoserine. Positions 352–397 are disordered; that stretch reads VEETDEMDQVELVDFDPNQERRRHYNGEAYEDDEHHPRGGVQCQTS. Residues 353 to 365 are compositionally biased toward acidic residues; the sequence is EETDEMDQVELVD. A Phosphotyrosine modification is found at tyrosine 381. Cysteine 394 carries the cysteine methyl ester modification. Cysteine 394 carries S-farnesyl cysteine lipidation. The propeptide at 395–397 is removed in mature form; sequence QTS.

Identified in a complex with HSPA1B and BAX. Interacts with RNF207.

It localises to the membrane. The protein resides in the cytoplasm. The protein localises to the microsome. Its subcellular location is the mitochondrion. It is found in the nucleus. It localises to the perinuclear region. Functionally, co-chaperone for HSPA8/Hsc70. Plays a role in protein transport into mitochondria via its role as co-chaperone. Functions as co-chaperone for HSPA1B and negatively regulates the translocation of BAX from the cytosol to mitochondria in response to cellular stress, thereby protecting cells against apoptosis. Stimulates ATP hydrolysis, but not the folding of unfolded proteins mediated by HSPA1A (in vitro). Promotes apoptosis in response to cellular stress mediated by exposure to anisomycin or UV. This Bos taurus (Bovine) protein is DnaJ homolog subfamily A member 1 (DNAJA1).